Reading from the N-terminus, the 632-residue chain is DNA topoisomerase 4 subunit B (632 aa).

ATP contacts are provided by residues Tyr-5, Asn-42, Asp-69, 110–116 (GLHGVGI), and Lys-334. One can recognise a Toprim domain in the interval 412-525 (TELFLVEGDS…DGHVYVAMPP (114 aa)). Mg(2+) is bound by residues Glu-418, Asp-490, and Asp-492.

The protein belongs to the type II topoisomerase family. ParE type 1 subfamily. As to quaternary structure, heterotetramer composed of ParC and ParE. It depends on Mg(2+) as a cofactor. Mn(2+) serves as cofactor. The cofactor is Ca(2+).

It catalyses the reaction ATP-dependent breakage, passage and rejoining of double-stranded DNA.. In terms of biological role, topoisomerase IV is essential for chromosome segregation. It relaxes supercoiled DNA. Performs the decatenation events required during the replication of a circular DNA molecule. This is DNA topoisomerase 4 subunit B from Haemophilus influenzae (strain ATCC 51907 / DSM 11121 / KW20 / Rd).